The following is a 278-amino-acid chain: Cell division protein FtsQ (278 aa).

Residues 1–6 lie on the Cytoplasmic side of the membrane; the sequence is MNATLR. The chain crosses the membrane as a helical span at residues 7-27; the sequence is ILAWLIAVALVALPVVAVLNG. Topologically, residues 28 to 278 are periplasmic; that stretch reads WVGAERWPLA…SPFAIPGFKT (251 aa). In terms of domain architecture, POTRA spans 34–103; the sequence is WPLARLRVSG…DVLEVHVVEH (70 aa).

This sequence belongs to the FtsQ/DivIB family. FtsQ subfamily. Part of a complex composed of FtsB, FtsL and FtsQ.

It is found in the cell inner membrane. Functionally, essential cell division protein. May link together the upstream cell division proteins, which are predominantly cytoplasmic, with the downstream cell division proteins, which are predominantly periplasmic. May control correct divisome assembly. The protein is Cell division protein FtsQ of Xanthomonas campestris pv. campestris (strain ATCC 33913 / DSM 3586 / NCPPB 528 / LMG 568 / P 25).